A 449-amino-acid polypeptide reads, in one-letter code: Glutamyl-tRNA reductase (449 aa).

Substrate is bound by residues 58 to 61 (TCNR), serine 121, 126 to 128 (ETQ), and glutamine 132. Cysteine 59 (nucleophile) is an active-site residue. 203–208 (GLGEMA) contributes to the NADP(+) binding site.

This sequence belongs to the glutamyl-tRNA reductase family. As to quaternary structure, homodimer.

The catalysed reaction is (S)-4-amino-5-oxopentanoate + tRNA(Glu) + NADP(+) = L-glutamyl-tRNA(Glu) + NADPH + H(+). Its pathway is porphyrin-containing compound metabolism; protoporphyrin-IX biosynthesis; 5-aminolevulinate from L-glutamyl-tRNA(Glu): step 1/2. Catalyzes the NADPH-dependent reduction of glutamyl-tRNA(Glu) to glutamate 1-semialdehyde (GSA). This chain is Glutamyl-tRNA reductase, found in Helicobacter pylori (strain G27).